Consider the following 312-residue polypeptide: Heterotepalin-4 (312 aa).

The N-terminal stretch at 1–22 is a signal peptide; the sequence is MKSMLVVTISVWLILAPTSTWA. Intrachain disulfides connect Cys56/Cys280 and Cys107/Cys128. The active site involves Glu197. Residues 284–312 constitute a propeptide that is removed on maturation; it reads YNQNAMFPQLIMSTYYNYMANLGDLFEEF.

It catalyses the reaction Endohydrolysis of the N-glycosidic bond at one specific adenosine on the 28S rRNA.. Its function is as follows. Inhibits protein synthesis in vitro. The sequence is that of Heterotepalin-4 from Phytolacca heterotepala (Mexican pokeweed).